Reading from the N-terminus, the 878-residue chain is F-box DNA helicase protein 1 (878 aa).

The F-box domain occupies 8 to 56; it reads SCKFYRLPLEIIPLICRFLSVQDIQSFIRVFPSFQTILDSSNDLFWKKK.

Belongs to the helicase family. UvrD subfamily. Part of the E3 ubiquitin ligase Skp1-Cullin-1-F-box (SCF) complex. Interacts with skp1 and ssb1. Requires Mg(2+) as cofactor. The cofactor is Mn(2+).

Its subcellular location is the cytoplasm. It localises to the nucleus. The catalysed reaction is Couples ATP hydrolysis with the unwinding of duplex DNA by translocating in the 3'-5' direction.. The enzyme catalyses ATP + H2O = ADP + phosphate + H(+). The protein operates within protein modification; protein ubiquitination. Functionally, involved in ATP-dependent DNA-unwinding in a 3' to 5' direction, and ATP-ase activities stimulated by the single-stranded DNA-binding protein ssb1. Essential for viability and normal growth of stationary phase cells and in the absence of either srs2 or rqh1 DNA helicase. Involved in DNA recombination repair of strand breaks and stalled or collapsed replication forks, on the rhp51-dependent pathway: promotes rhp51 filament dissolution from stalled forks, thereby inhibiting homologous recombination and preventing excessive recombination. Ubiquitination and DNA helicase activities are essential for controlling rhp51-dependent recombination in the absence of rad22. Plays a role in the processing of toxic recombination intermediates. Promotes proper chromosome segregation. The sequence is that of F-box DNA helicase protein 1 (fbh1) from Schizosaccharomyces pombe (strain 972 / ATCC 24843) (Fission yeast).